The following is a 277-amino-acid chain: Undecaprenyl-diphosphatase (277 aa).

6 consecutive transmembrane segments (helical) span residues 44–64 (RAMA…VWEF), 86–106 (GNLL…ADLI), 110–130 (LFNP…MLWA), 184–204 (AATE…AVYS), 215–235 (GDLP…MIAV), and 250–270 (FAWY…FGWV).

The protein belongs to the UppP family.

It is found in the cell inner membrane. The enzyme catalyses di-trans,octa-cis-undecaprenyl diphosphate + H2O = di-trans,octa-cis-undecaprenyl phosphate + phosphate + H(+). Its function is as follows. Catalyzes the dephosphorylation of undecaprenyl diphosphate (UPP). Confers resistance to bacitracin. The chain is Undecaprenyl-diphosphatase from Pseudomonas putida (strain ATCC 47054 / DSM 6125 / CFBP 8728 / NCIMB 11950 / KT2440).